The chain runs to 35 residues: SKKIGLFYGTZTGKTESVAEIIDEFGDEVVTLDID.

In terms of domain architecture, Flavodoxin-like spans 4–35 (IGLFYGTZTGKTESVAEIIDEFGDEVVTLDID).

Belongs to the flavodoxin family. It depends on FMN as a cofactor.

Low-potential electron donor to a number of redox enzymes. This is Flavodoxin from Nostoc sp. (strain MAC).